Here is a 121-residue protein sequence, read N- to C-terminus: Large ribosomal subunit protein uL18 (121 aa).

The segment covering 1-22 has biased composition (basic residues); sequence MIKKPDKKTLRQGKHKRVRRKV. Residues 1–23 form a disordered region; it reads MIKKPDKKTLRQGKHKRVRRKVA.

The protein belongs to the universal ribosomal protein uL18 family. Part of the 50S ribosomal subunit; part of the 5S rRNA/L5/L18/L25 subcomplex. Contacts the 5S and 23S rRNAs.

In terms of biological role, this is one of the proteins that bind and probably mediate the attachment of the 5S RNA into the large ribosomal subunit, where it forms part of the central protuberance. The polypeptide is Large ribosomal subunit protein uL18 (Syntrophomonas wolfei subsp. wolfei (strain DSM 2245B / Goettingen)).